Here is a 499-residue protein sequence, read N- to C-terminus: Aspartyl/glutamyl-tRNA(Asn/Gln) amidotransferase subunit B (499 aa).

This sequence belongs to the GatB/GatE family. GatB subfamily. As to quaternary structure, heterotrimer of A, B and C subunits.

It carries out the reaction L-glutamyl-tRNA(Gln) + L-glutamine + ATP + H2O = L-glutaminyl-tRNA(Gln) + L-glutamate + ADP + phosphate + H(+). The enzyme catalyses L-aspartyl-tRNA(Asn) + L-glutamine + ATP + H2O = L-asparaginyl-tRNA(Asn) + L-glutamate + ADP + phosphate + 2 H(+). Functionally, allows the formation of correctly charged Asn-tRNA(Asn) or Gln-tRNA(Gln) through the transamidation of misacylated Asp-tRNA(Asn) or Glu-tRNA(Gln) in organisms which lack either or both of asparaginyl-tRNA or glutaminyl-tRNA synthetases. The reaction takes place in the presence of glutamine and ATP through an activated phospho-Asp-tRNA(Asn) or phospho-Glu-tRNA(Gln). The chain is Aspartyl/glutamyl-tRNA(Asn/Gln) amidotransferase subunit B from Salinispora tropica (strain ATCC BAA-916 / DSM 44818 / JCM 13857 / NBRC 105044 / CNB-440).